Reading from the N-terminus, the 205-residue chain is Isochorismatase domain-containing protein 2 (205 aa).

This sequence belongs to the isochorismatase family. As to quaternary structure, interacts with CDKN2A.

It localises to the cytoplasm. It is found in the nucleus. The sequence is that of Isochorismatase domain-containing protein 2 (ISOC2) from Macaca fascicularis (Crab-eating macaque).